The primary structure comprises 519 residues: AarF domain-containing protein kinase 1 (519 aa).

The 337-residue stretch at 145–481 (SFEDTPLGAA…SLYRRVHISL (337 aa)) folds into the Protein kinase domain. Residues 151-159 (LGAASLAQV) and Lys173 contribute to the ATP site. The active-site Proton acceptor is Asp305.

The protein belongs to the protein kinase superfamily. ADCK protein kinase family.

The protein localises to the mitochondrion. Functionally, appears to be essential for maintaining mitochondrial cristae formation and mitochondrial function by acting via YME1L1 in a kinase-independent manner to regulate essential mitochondrial structural proteins OPA1 and IMMT. The action of this enzyme is not yet clear. It is not known if it has protein kinase activity and what type of substrate it would phosphorylate (Ser, Thr or Tyr). The sequence is that of AarF domain-containing protein kinase 1 (ADCK1) from Gallus gallus (Chicken).